The primary structure comprises 131 residues: MAQIPARGDCSRQLTRKQAGDAWEAAARRWLESKGLRFIAANVRERGGEIDLIMRDGKTTVFVEVRYRRSGLYGGAAASVTRSKQHKLLHTARLWLARQNGSFDTVDCRFDVLAFTGNEIEWFRDAFNDHS.

Belongs to the UPF0102 family.

The chain is UPF0102 protein YraN from Salmonella typhimurium (strain LT2 / SGSC1412 / ATCC 700720).